A 614-amino-acid chain; its full sequence is Aspartate--tRNA ligase (614 aa).

Glu174 serves as a coordination point for L-aspartate. The segment at 198 to 201 (QLFK) is aspartate. Residue Arg220 participates in L-aspartate binding. Residues 220-222 (RDE) and Gln229 each bind ATP. Residue His448 coordinates L-aspartate. Glu482 is a binding site for ATP. Residue Arg489 participates in L-aspartate binding. Position 534–537 (534–537 (GLDR)) interacts with ATP. The tract at residues 587–614 (YEDSVKETEQRLEKEAQEDADKNSTWDE) is disordered.

It belongs to the class-II aminoacyl-tRNA synthetase family. Type 1 subfamily. Homodimer.

The protein localises to the cytoplasm. It carries out the reaction tRNA(Asp) + L-aspartate + ATP = L-aspartyl-tRNA(Asp) + AMP + diphosphate. In terms of biological role, catalyzes the attachment of L-aspartate to tRNA(Asp) in a two-step reaction: L-aspartate is first activated by ATP to form Asp-AMP and then transferred to the acceptor end of tRNA(Asp). The sequence is that of Aspartate--tRNA ligase from Lactobacillus johnsonii (strain CNCM I-12250 / La1 / NCC 533).